We begin with the raw amino-acid sequence, 259 residues long: Deoxyribose-phosphate aldolase (259 aa).

Aspartate 102 acts as the Proton donor/acceptor in catalysis. Lysine 167 functions as the Schiff-base intermediate with acetaldehyde in the catalytic mechanism. Lysine 201 (proton donor/acceptor) is an active-site residue.

Belongs to the DeoC/FbaB aldolase family. DeoC type 2 subfamily.

The protein localises to the cytoplasm. It catalyses the reaction 2-deoxy-D-ribose 5-phosphate = D-glyceraldehyde 3-phosphate + acetaldehyde. The protein operates within carbohydrate degradation; 2-deoxy-D-ribose 1-phosphate degradation; D-glyceraldehyde 3-phosphate and acetaldehyde from 2-deoxy-alpha-D-ribose 1-phosphate: step 2/2. In terms of biological role, catalyzes a reversible aldol reaction between acetaldehyde and D-glyceraldehyde 3-phosphate to generate 2-deoxy-D-ribose 5-phosphate. The protein is Deoxyribose-phosphate aldolase of Escherichia coli O8 (strain IAI1).